The following is a 132-amino-acid chain: Myelin P2 protein (132 aa).

At Ser2 the chain carries N-acetylserine. Position 107 (Arg107) interacts with (9Z)-octadecenoate. A hexadecanoate-binding site is contributed by Arg107. Cys118 and Cys125 are joined by a disulfide. 127–129 contacts (9Z)-octadecenoate; it reads RIY. Residue 127 to 129 coordinates hexadecanoate; it reads RIY.

It belongs to the calycin superfamily. Fatty-acid binding protein (FABP) family. In terms of assembly, monomer.

Its subcellular location is the cytoplasm. Functionally, may play a role in lipid transport protein in Schwann cells. May bind cholesterol. The protein is Myelin P2 protein (PMP2) of Bos taurus (Bovine).